Consider the following 243-residue polypeptide: Sec-independent protein translocase protein TatC (243 aa).

7 consecutive transmembrane segments (helical) span residues 18–38, 70–90, 106–126, 132–152, 153–173, 191–211, and 213–233; these read VIII…NYVD, IAII…IWSF, MIPV…FTVF, FLLQ…KYIS, FALN…VVYI, YALL…DVIS, and LLMA…AKFI.

It belongs to the TatC family. As to quaternary structure, forms a complex with TatA.

Its subcellular location is the cell membrane. In terms of biological role, part of the twin-arginine translocation (Tat) system that transports large folded proteins containing a characteristic twin-arginine motif in their signal peptide across membranes. The protein is Sec-independent protein translocase protein TatC of Carboxydothermus hydrogenoformans (strain ATCC BAA-161 / DSM 6008 / Z-2901).